The chain runs to 291 residues: Phosphate import ATP-binding protein PstB (291 aa).

Positions 44–286 constitute an ABC transporter domain; sequence VKAREVNVFY…PEEKRTQDYI (243 aa). 76-83 serves as a coordination point for ATP; it reads GPSGCGKS.

It belongs to the ABC transporter superfamily. Phosphate importer (TC 3.A.1.7) family. In terms of assembly, the complex is composed of two ATP-binding proteins (PstB), two transmembrane proteins (PstC and PstA) and a solute-binding protein (PstS).

The protein localises to the cell inner membrane. The catalysed reaction is phosphate(out) + ATP + H2O = ADP + 2 phosphate(in) + H(+). Part of the ABC transporter complex PstSACB involved in phosphate import. Responsible for energy coupling to the transport system. The polypeptide is Phosphate import ATP-binding protein PstB (Chelativorans sp. (strain BNC1)).